Reading from the N-terminus, the 407-residue chain is Peptidase T (407 aa).

Histidine 82 lines the Zn(2+) pocket. Aspartate 84 is an active-site residue. Aspartate 143 lines the Zn(2+) pocket. Residue glutamate 177 is the Proton acceptor of the active site. Zn(2+)-binding residues include glutamate 178, aspartate 200, and histidine 382.

This sequence belongs to the peptidase M20B family. Requires Zn(2+) as cofactor.

It localises to the cytoplasm. The catalysed reaction is Release of the N-terminal residue from a tripeptide.. In terms of biological role, cleaves the N-terminal amino acid of tripeptides. The sequence is that of Peptidase T from Streptococcus pyogenes serotype M18 (strain MGAS8232).